A 152-amino-acid polypeptide reads, in one-letter code: Ribonuclease H (152 aa).

One can recognise an RNase H type-1 domain in the interval 1 to 142 (MDSKVVIYTD…ADKLAVQGRE (142 aa)). Mg(2+) contacts are provided by aspartate 10, glutamate 48, aspartate 70, and aspartate 134.

It belongs to the RNase H family. Monomer. Requires Mg(2+) as cofactor.

It is found in the cytoplasm. It carries out the reaction Endonucleolytic cleavage to 5'-phosphomonoester.. Its function is as follows. Endonuclease that specifically degrades the RNA of RNA-DNA hybrids. This is Ribonuclease H from Rickettsia felis (strain ATCC VR-1525 / URRWXCal2) (Rickettsia azadi).